Consider the following 226-residue polypeptide: Ribonuclease 3 (226 aa).

In terms of domain architecture, RNase III spans 5–127 (TFQRGDPIGH…IVAAIYLDCG (123 aa)). E40 is a Mg(2+) binding site. D44 is an active-site residue. Positions 113 and 116 each coordinate Mg(2+). E116 is an active-site residue. A DRBM domain is found at 154–224 (DPKTRLQEWL…ATLVIAQLDS (71 aa)).

This sequence belongs to the ribonuclease III family. As to quaternary structure, homodimer. Requires Mg(2+) as cofactor.

It localises to the cytoplasm. It catalyses the reaction Endonucleolytic cleavage to 5'-phosphomonoester.. Its function is as follows. Digests double-stranded RNA. Involved in the processing of primary rRNA transcript to yield the immediate precursors to the large and small rRNAs (23S and 16S). Processes some mRNAs, and tRNAs when they are encoded in the rRNA operon. Processes pre-crRNA and tracrRNA of type II CRISPR loci if present in the organism. The chain is Ribonuclease 3 from Xanthomonas axonopodis pv. citri (strain 306).